The primary structure comprises 398 residues: Fe-regulated protein 8 (398 aa).

Functionally, protein of unknown function; part of the gene cluster that mediates the biosynthesis of siderophore ferrichrome A which is contributing to organismal virulence. This chain is Fe-regulated protein 8, found in Mycosarcoma maydis (Corn smut fungus).